The following is a 326-amino-acid chain: Isoaspartyl peptidase/L-asparaginase (326 aa).

Residue threonine 185 is the Nucleophile of the active site. Residues 213-216 and 236-239 each bind substrate; these read RVGD and TGHG.

The protein belongs to the Ntn-hydrolase family. In terms of assembly, heterodimer of an alpha and beta chain produced by autocleavage. This heterodimer may then dimerize in turn, giving rise to a heterotetramer. Post-translationally, cleaved into an alpha and beta chain by autocatalysis; this activates the enzyme. The N-terminal residue of the beta subunit is responsible for the nucleophile hydrolase activity. High expression in the heart and brain while low to minimal expression in the other tissues. In ocular tissues, high levels is observed in the optic nerve and retina while relatively low levels of expression are detected in the iris-ciliary body, lens or retinal pigment epithelium.

It is found in the cytoplasm. It catalyses the reaction L-asparagine + H2O = L-aspartate + NH4(+). The catalysed reaction is Cleavage of a beta-linked Asp residue from the N-terminus of a polypeptide.. Has both L-asparaginase and beta-aspartyl peptidase activity. May be involved in the production of L-aspartate, which can act as an excitatory neurotransmitter in some brain regions. Is highly active with L-Asp beta-methyl ester. Besides, has catalytic activity toward beta-aspartyl dipeptides and their methyl esters, including beta-L-Asp-L-Phe, beta-L-Asp-L-Phe methyl ester (aspartame), beta-L-Asp-L-Ala, beta-L-Asp-L-Leu and beta-L-Asp-L-Lys. Does not have aspartylglucosaminidase activity and is inactive toward GlcNAc-L-Asn. Likewise, has no activity toward glutamine. The protein is Isoaspartyl peptidase/L-asparaginase (Asrgl1) of Mus musculus (Mouse).